The chain runs to 193 residues: Pre-histone-like nucleoprotein (193 aa).

At Ser2 the chain carries N-acetylserine; by host. The propeptide occupies 2–24 (SIFISPSNNTGWGLRAPSKMYGG). Lys48 carries the N6-acetyllysine; by host modification. Phosphothreonine; by host is present on Thr55. Positions 183–193 (RVPVRTRPPRT) match the Nuclear localization signal motif.

It belongs to the adenoviridae histone-like nucleoprotein family. In terms of assembly, interacts with the core-capsid bridging protein; this interaction bridges the virus core to the capsid. Interacts with host NPM1; this interaction might play a role in placing the pre-histone-like nucleoprotein on the viral DNA or regulating viral gene expression. Interacts with host HMGB1; this interaction inhibits host immune response. Post-translationally, cleaved near the N-terminus by the viral protease during virion maturation to form the mature protein.

It is found in the virion. The protein resides in the host nucleus. The protein localises to the host nucleolus. In terms of biological role, plays a role in the inhibition of host immune response within the nucleus. Interacts with cellular nucleosomes and immobilizes the host immune danger signal HMGB1 on chromatin. In turn, prevents HMGB1 release out of the cell and thus decreases inflammation. Also plays a role in the wrapping and condensation of the viral DNA. May also promote viral genome import into the nucleus. This is Pre-histone-like nucleoprotein from Homo sapiens (Human).